Reading from the N-terminus, the 244-residue chain is Phosphoadenosine 5'-phosphosulfate reductase (244 aa).

Cys-239 serves as the catalytic Nucleophile; cysteine thiosulfonate intermediate.

It belongs to the PAPS reductase family. CysH subfamily.

Its subcellular location is the cytoplasm. It catalyses the reaction [thioredoxin]-disulfide + sulfite + adenosine 3',5'-bisphosphate + 2 H(+) = [thioredoxin]-dithiol + 3'-phosphoadenylyl sulfate. It participates in sulfur metabolism; hydrogen sulfide biosynthesis; sulfite from sulfate: step 3/3. Its function is as follows. Catalyzes the formation of sulfite from phosphoadenosine 5'-phosphosulfate (PAPS) using thioredoxin as an electron donor. This chain is Phosphoadenosine 5'-phosphosulfate reductase, found in Cronobacter sakazakii (strain ATCC BAA-894) (Enterobacter sakazakii).